Reading from the N-terminus, the 325-residue chain is Probable tRNA pseudouridine synthase B (325 aa).

D71 (nucleophile) is an active-site residue. The 76-residue stretch at 238–313 (LPKIYVKDSA…VAASIERVIM (76 aa)) folds into the PUA domain.

This sequence belongs to the pseudouridine synthase TruB family. Type 2 subfamily.

It carries out the reaction uridine(55) in tRNA = pseudouridine(55) in tRNA. Its function is as follows. Could be responsible for synthesis of pseudouridine from uracil-55 in the psi GC loop of transfer RNAs. This chain is Probable tRNA pseudouridine synthase B, found in Korarchaeum cryptofilum (strain OPF8).